The sequence spans 277 residues: 3-methyl-2-oxobutanoate hydroxymethyltransferase (277 aa).

Positions 53 and 96 each coordinate Mg(2+). Residues 53 to 54 (DS), D96, and K126 each bind 3-methyl-2-oxobutanoate. Position 128 (E128) interacts with Mg(2+). Residue E195 is the Proton acceptor of the active site.

It belongs to the PanB family. As to quaternary structure, homodecamer; pentamer of dimers. Mg(2+) serves as cofactor.

The protein localises to the cytoplasm. The catalysed reaction is 3-methyl-2-oxobutanoate + (6R)-5,10-methylene-5,6,7,8-tetrahydrofolate + H2O = 2-dehydropantoate + (6S)-5,6,7,8-tetrahydrofolate. It participates in cofactor biosynthesis; (R)-pantothenate biosynthesis; (R)-pantoate from 3-methyl-2-oxobutanoate: step 1/2. In terms of biological role, catalyzes the reversible reaction in which hydroxymethyl group from 5,10-methylenetetrahydrofolate is transferred onto alpha-ketoisovalerate to form ketopantoate. In Chlorobium phaeobacteroides (strain DSM 266 / SMG 266 / 2430), this protein is 3-methyl-2-oxobutanoate hydroxymethyltransferase.